We begin with the raw amino-acid sequence, 55 residues long: Large ribosomal subunit protein bL32 (55 aa).

A compositionally biased stretch (basic residues) spans 1–23 (MAVPKKKTSKAKRDQRRAHWKRK). Residues 1–26 (MAVPKKKTSKAKRDQRRAHWKRKATI) are disordered.

This sequence belongs to the bacterial ribosomal protein bL32 family.

This is Large ribosomal subunit protein bL32 from Picosynechococcus sp. (strain ATCC 27264 / PCC 7002 / PR-6) (Agmenellum quadruplicatum).